A 399-amino-acid chain; its full sequence is Lipoyl synthase, mitochondrial (399 aa).

A mitochondrion-targeting transit peptide spans 1–14 (MALISRSCGAASRY). Positions 39 to 52 (AASTSSSSSPSPST) are enriched in low complexity. The segment at 39-60 (AASTSSSSSPSPSTHNDRKKDL) is disordered. The [4Fe-4S] cluster site is built by Cys-128, Cys-133, Cys-139, Cys-159, Cys-163, Cys-166, and Ser-374. A Radical SAM core domain is found at 144–363 (EYATATATIM…EKVGQEMGFI (220 aa)).

It belongs to the radical SAM superfamily. Lipoyl synthase family. [4Fe-4S] cluster serves as cofactor.

It is found in the mitochondrion. The enzyme catalyses [[Fe-S] cluster scaffold protein carrying a second [4Fe-4S](2+) cluster] + N(6)-octanoyl-L-lysyl-[protein] + 2 oxidized [2Fe-2S]-[ferredoxin] + 2 S-adenosyl-L-methionine + 4 H(+) = [[Fe-S] cluster scaffold protein] + N(6)-[(R)-dihydrolipoyl]-L-lysyl-[protein] + 4 Fe(3+) + 2 hydrogen sulfide + 2 5'-deoxyadenosine + 2 L-methionine + 2 reduced [2Fe-2S]-[ferredoxin]. It functions in the pathway protein modification; protein lipoylation via endogenous pathway; protein N(6)-(lipoyl)lysine from octanoyl-[acyl-carrier-protein]: step 2/2. Catalyzes the radical-mediated insertion of two sulfur atoms into the C-6 and C-8 positions of the octanoyl moiety bound to the lipoyl domains of lipoate-dependent enzymes, thereby converting the octanoylated domains into lipoylated derivatives. This Danio rerio (Zebrafish) protein is Lipoyl synthase, mitochondrial (lias).